Reading from the N-terminus, the 789-residue chain is Glycerol-3-phosphate acyltransferase (789 aa).

An HXXXXD motif motif is present at residues 276 to 281; that stretch reads HRSYID.

Belongs to the GPAT/DAPAT family.

Its subcellular location is the cell membrane. It catalyses the reaction sn-glycerol 3-phosphate + an acyl-CoA = a 1-acyl-sn-glycero-3-phosphate + CoA. It participates in phospholipid metabolism; CDP-diacylglycerol biosynthesis; CDP-diacylglycerol from sn-glycerol 3-phosphate: step 1/3. The polypeptide is Glycerol-3-phosphate acyltransferase (plsB) (Mycobacterium tuberculosis (strain CDC 1551 / Oshkosh)).